We begin with the raw amino-acid sequence, 337 residues long: Large ribosomal subunit protein uL3 (337 aa).

The protein belongs to the universal ribosomal protein uL3 family. In terms of assembly, part of the 50S ribosomal subunit. Forms a cluster with proteins L14 and L24e.

Its function is as follows. One of the primary rRNA binding proteins, it binds directly near the 3'-end of the 23S rRNA, where it nucleates assembly of the 50S subunit. The polypeptide is Large ribosomal subunit protein uL3 (Methanosphaerula palustris (strain ATCC BAA-1556 / DSM 19958 / E1-9c)).